Here is a 671-residue protein sequence, read N- to C-terminus: UvrABC system protein B (671 aa).

Residues 25–412 (EGIDAGLAHQ…AGRIVEQVVR (388 aa)) enclose the Helicase ATP-binding domain. 38-45 (GVTGSGKT) contributes to the ATP binding site. Positions 91–114 (YYDYYQPEAYVPSSDTFIEKDASI) match the Beta-hairpin motif. The Helicase C-terminal domain maps to 429–582 (QVDDLLSEIH…QIAFNLEHGI (154 aa)). The interval 601 to 625 (PGSRSKKRKGMAKAAEESARYENEL) is disordered. Basic and acidic residues predominate over residues 614-625 (AAEESARYENEL). One can recognise a UVR domain in the interval 632–667 (NKRIRQLEEKMYQLARDLEFEAAAQMRDEIGKLRER).

This sequence belongs to the UvrB family. As to quaternary structure, forms a heterotetramer with UvrA during the search for lesions. Interacts with UvrC in an incision complex.

It localises to the cytoplasm. In terms of biological role, the UvrABC repair system catalyzes the recognition and processing of DNA lesions. A damage recognition complex composed of 2 UvrA and 2 UvrB subunits scans DNA for abnormalities. Upon binding of the UvrA(2)B(2) complex to a putative damaged site, the DNA wraps around one UvrB monomer. DNA wrap is dependent on ATP binding by UvrB and probably causes local melting of the DNA helix, facilitating insertion of UvrB beta-hairpin between the DNA strands. Then UvrB probes one DNA strand for the presence of a lesion. If a lesion is found the UvrA subunits dissociate and the UvrB-DNA preincision complex is formed. This complex is subsequently bound by UvrC and the second UvrB is released. If no lesion is found, the DNA wraps around the other UvrB subunit that will check the other stand for damage. This Pseudomonas syringae pv. tomato (strain ATCC BAA-871 / DC3000) protein is UvrABC system protein B.